Reading from the N-terminus, the 288-residue chain is Polyamine aminopropyltransferase (288 aa).

Positions 9 to 238 constitute a PABS domain; it reads ETLHDQFGQY…GIMTFAWATD (230 aa). Gln33 provides a ligand contact to S-methyl-5'-thioadenosine. Spermidine-binding residues include His64 and Asp88. Residues Glu108 and 140–141 each bind S-methyl-5'-thioadenosine; that span reads DG. The active-site Proton acceptor is Asp158. A spermidine-binding site is contributed by 158 to 161; that stretch reads DCTD. Residue Pro165 participates in S-methyl-5'-thioadenosine binding.

This sequence belongs to the spermidine/spermine synthase family. Homodimer or homotetramer.

The protein resides in the cytoplasm. It catalyses the reaction S-adenosyl 3-(methylsulfanyl)propylamine + putrescine = S-methyl-5'-thioadenosine + spermidine + H(+). The protein operates within amine and polyamine biosynthesis; spermidine biosynthesis; spermidine from putrescine: step 1/1. Functionally, catalyzes the irreversible transfer of a propylamine group from the amino donor S-adenosylmethioninamine (decarboxy-AdoMet) to putrescine (1,4-diaminobutane) to yield spermidine. The sequence is that of Polyamine aminopropyltransferase from Escherichia coli O17:K52:H18 (strain UMN026 / ExPEC).